The primary structure comprises 518 residues: Gypsy retrotransposon integrase-like protein 1 (518 aa).

The Integrase catalytic domain maps to 130-292 (QQHLPMVGNP…TPYFQMFNRN (163 aa)). Phosphoserine is present on serine 498.

This Mus musculus (Mouse) protein is Gypsy retrotransposon integrase-like protein 1 (Gin1).